A 436-amino-acid polypeptide reads, in one-letter code: ATP-dependent RNA helicase RhlB (436 aa).

Residues 9 to 37 (QKFADFPLHKEVHQALNEAGFEFCTPIQA) carry the Q motif motif. A Helicase ATP-binding domain is found at 40–219 (LPILLEKKDI…YDHMNEPEKV (180 aa)). Position 53–60 (53–60 (AQTGTGKT)) interacts with ATP. The DEAD box motif lies at 165–168 (DEAD). The Helicase C-terminal domain maps to 243-390 (KMPLLLSLLE…VTSYDSDALL (148 aa)). Residues 392–436 (DIPPPVRIHRKPSTHTRNTRDRGASRPQGGQRSGPRRHDRTRRHS) are disordered. The span at 425–436 (GPRRHDRTRRHS) shows a compositional bias: basic residues.

It belongs to the DEAD box helicase family. RhlB subfamily. As to quaternary structure, component of the RNA degradosome, which is a multiprotein complex involved in RNA processing and mRNA degradation.

It is found in the cytoplasm. The catalysed reaction is ATP + H2O = ADP + phosphate + H(+). In terms of biological role, DEAD-box RNA helicase involved in RNA degradation. Has RNA-dependent ATPase activity and unwinds double-stranded RNA. This chain is ATP-dependent RNA helicase RhlB, found in Shewanella halifaxensis (strain HAW-EB4).